A 101-amino-acid chain; its full sequence is Small ribosomal subunit protein uS14 (101 aa).

This sequence belongs to the universal ribosomal protein uS14 family. Part of the 30S ribosomal subunit. Contacts proteins S3 and S10.

Functionally, binds 16S rRNA, required for the assembly of 30S particles and may also be responsible for determining the conformation of the 16S rRNA at the A site. The protein is Small ribosomal subunit protein uS14 of Shewanella piezotolerans (strain WP3 / JCM 13877).